The chain runs to 268 residues: Movement protein (268 aa).

Positions 216–238 (KKSDVRKGKNSSSVRSVPNKNYR) are disordered. Residues 225-237 (NSSSVRSVPNKNY) are compositionally biased toward polar residues.

This sequence belongs to the tobamovirus movement protein family. In terms of assembly, binds to host RBCS at the plasmodesmata; this interaction seems required for viral systemic movement. In resistant plants, interacts with host MBP2C at host microtubules; this interaction prevents virus cell to cell movement. In resistant plants, interacts with host resistance (R) protein (e.g. tomato ToMV resistance protein TM-2(2), AC Q71BG9) at the host plasma membrane; this interaction triggers host defense responses leading to programmed cell death.

Its subcellular location is the host cytoplasm. The protein resides in the host cytoskeleton. It localises to the host cell junction. It is found in the host plasmodesma. In terms of biological role, transports viral genome to neighboring plant cells directly through plasmosdesmata, without any budding. The movement protein allows efficient cell to cell propagation, by bypassing the host cell wall barrier. Forms a ribonucleoprotein complex with viral RNA. Binds microtubules and modulates microtubule stability. Can bind double-stranded DNA. Triggers host hypersensitive defense reaction in incompatible plants harboring resistance (R) proteins. The polypeptide is Movement protein (MP) (Nicotiana tabacum (Common tobacco)).